Consider the following 256-residue polypeptide: Thiazole synthase (256 aa).

Catalysis depends on lysine 95, which acts as the Schiff-base intermediate with DXP. 1-deoxy-D-xylulose 5-phosphate contacts are provided by residues glycine 156, 182-183 (AG), and 204-205 (NT).

It belongs to the ThiG family. In terms of assembly, homotetramer. Forms heterodimers with either ThiH or ThiS.

The protein localises to the cytoplasm. It carries out the reaction [ThiS sulfur-carrier protein]-C-terminal-Gly-aminoethanethioate + 2-iminoacetate + 1-deoxy-D-xylulose 5-phosphate = [ThiS sulfur-carrier protein]-C-terminal Gly-Gly + 2-[(2R,5Z)-2-carboxy-4-methylthiazol-5(2H)-ylidene]ethyl phosphate + 2 H2O + H(+). The protein operates within cofactor biosynthesis; thiamine diphosphate biosynthesis. Its function is as follows. Catalyzes the rearrangement of 1-deoxy-D-xylulose 5-phosphate (DXP) to produce the thiazole phosphate moiety of thiamine. Sulfur is provided by the thiocarboxylate moiety of the carrier protein ThiS. In vitro, sulfur can be provided by H(2)S. The protein is Thiazole synthase of Salmonella enteritidis PT4 (strain P125109).